Here is a 145-residue protein sequence, read N- to C-terminus: Ribosomal RNA large subunit methyltransferase H (145 aa).

S-adenosyl-L-methionine contacts are provided by residues Leu-64, Gly-93, and 112–117 (LSALTF).

This sequence belongs to the RNA methyltransferase RlmH family. Homodimer.

The protein localises to the cytoplasm. It carries out the reaction pseudouridine(1915) in 23S rRNA + S-adenosyl-L-methionine = N(3)-methylpseudouridine(1915) in 23S rRNA + S-adenosyl-L-homocysteine + H(+). In terms of biological role, specifically methylates the pseudouridine at position 1915 (m3Psi1915) in 23S rRNA. The chain is Ribosomal RNA large subunit methyltransferase H from Prochlorococcus marinus (strain SARG / CCMP1375 / SS120).